Consider the following 656-residue polypeptide: Anion exchange transporter (656 aa).

Residues Met-1–His-75 lie on the Cytoplasmic side of the membrane. A helical transmembrane segment spans residues Pro-76–Gly-96. The Extracellular portion of the chain corresponds to Arg-97–Arg-144. The helical transmembrane segment at Ile-145–Leu-165 threads the bilayer. Gln-166 is a topological domain (cytoplasmic). Residues Leu-167–Ala-187 form a helical membrane-spanning segment. The Extracellular portion of the chain corresponds to Thr-188–Leu-199. The helical transmembrane segment at Gly-200–Phe-220 threads the bilayer. At Glu-221–Asn-222 the chain is on the cytoplasmic side. A helical transmembrane segment spans residues Ile-223 to Leu-243. The Extracellular portion of the chain corresponds to Val-244–Lys-254. The helical transmembrane segment at Ile-255 to Cys-275 threads the bilayer. Over Thr-276–Ser-306 the chain is Cytoplasmic. A helical membrane pass occupies residues Ala-307–Ala-327. The Extracellular portion of the chain corresponds to Gln-328 to Glu-343. The helical transmembrane segment at Phe-344 to Ala-364 threads the bilayer. Topologically, residues Ala-365–Cys-383 are cytoplasmic. Helical transmembrane passes span Leu-384–Leu-404 and Pro-405–Arg-425. The Extracellular portion of the chain corresponds to Asp-426–Thr-448. A helical membrane pass occupies residues Ile-449 to Leu-469. The Cytoplasmic portion of the chain corresponds to Gly-470–Val-656. The region spanning Thr-492 to Ile-641 is the STAS domain. The tract at residues Ile-641–Val-656 is membrane targeting.

It belongs to the SLC26A/SulP transporter (TC 2.A.53) family. Expressed in the Reissner's membrane epithelial cells in the cochlea (at protein level). Expressed in the retinal pigment epithelium (at protein level). Abundantly expressed in parietal cells on the glandular portion of the stomach. Lower levels are observed in the kidney, with expression in the proximal tubule and thick ascending limb of the loop of Henle. Also expressed in distal segments of nephron, in extraglomerular mesagial cells and a subpopulation of intercalated cells of outer medullary collecting ducts. Expressed in the thyroid gland.

Its subcellular location is the basolateral cell membrane. It localises to the recycling endosome membrane. The protein localises to the apical cell membrane. It is found in the lateral cell membrane. It carries out the reaction chloride(in) = chloride(out). It catalyses the reaction iodide(out) = iodide(in). The catalysed reaction is bromide(in) = bromide(out). The enzyme catalyses oxalate(in) = oxalate(out). It carries out the reaction nitrate(in) = nitrate(out). It catalyses the reaction sulfate(in) = sulfate(out). The catalysed reaction is hydrogencarbonate(in) = hydrogencarbonate(out). The enzyme catalyses D-gluconate(in) = D-gluconate(out). It carries out the reaction thiocyanate(in) = thiocyanate(out). It catalyses the reaction hydrogencarbonate(in) + chloride(out) = hydrogencarbonate(out) + chloride(in). With respect to regulation, regulated by pH. Activity inhibited by all inhibitors of several anion channels and transporters, including 4,4'-Di-isothiocyanatostilbene-2,2'-disulfonic acid (DIDS), diphenylamine-2-carboxylic acid, glybenclamide and 5-Nitro-2-(3-phenylpropyl-amino)benzoic acid. In terms of biological role, acts as an anion channel mediating the transport of chloride, bromide, iodide, nitrate, sulfate, gluconate, thiocyanate and bicarbonate ions. Its permeability towards bicarbonate is weak and increases when pH is above 7. Mediates oxalate transport. Mediates thiocyanate transport in retinal pigment epithelium cells. Mediates iodide transport in the thyroid gland, playing an important role in the synthesis of thyroid hormones and the maintenance of thyroid function. Although it is an anion channel, according to PubMed:12736153 and PubMed:19723628 it has been shown to exhibit chloride-bicarbonate exchanger activity. This is Anion exchange transporter from Mus musculus (Mouse).